The primary structure comprises 407 residues: Arrestin homolog (407 aa).

The protein belongs to the arrestin family.

This chain is Arrestin homolog, found in Locusta migratoria (Migratory locust).